A 186-amino-acid polypeptide reads, in one-letter code: Ribosome-recycling factor (186 aa).

This sequence belongs to the RRF family.

The protein localises to the cytoplasm. Responsible for the release of ribosomes from messenger RNA at the termination of protein biosynthesis. May increase the efficiency of translation by recycling ribosomes from one round of translation to another. This Burkholderia ambifaria (strain ATCC BAA-244 / DSM 16087 / CCUG 44356 / LMG 19182 / AMMD) (Burkholderia cepacia (strain AMMD)) protein is Ribosome-recycling factor.